We begin with the raw amino-acid sequence, 316 residues long: Protein PXR1 (316 aa).

The G-patch domain maps to 25–71; it reads TSRFGHQYLERMGWKPGKGLGLVEHATTSHVKVSIKDDNLGLGSKLA. The interval 146-280 is disordered; it reads GTTKKRKIDS…DSMLMPKEQL (135 aa). Residues 179–195 are compositionally biased toward basic and acidic residues; the sequence is DRKEKEEKKTEKENSEI. Residues 196-209 show a composition bias toward basic residues; that stretch reads KKKKKEKKEKKEKK. The segment covering 210 to 240 has biased composition (basic and acidic residues); the sequence is EKKDKNEKKEKKDKNEKKEKKDKNEEKEKKE. The span at 241 to 260 shows a compositional bias: basic residues; sequence KKEKKEKKDKKDKKDKKDKK. Residues 261–270 show a composition bias toward basic and acidic residues; that stretch reads EKKEVKEVTR.

It belongs to the PINX1 family.

Its subcellular location is the nucleus. It is found in the nucleolus. Its function is as follows. Involved in rRNA-processing at A0, A1 and A2 sites and negatively regulates telomerase. This chain is Protein PXR1 (PXR1), found in Debaryomyces hansenii (strain ATCC 36239 / CBS 767 / BCRC 21394 / JCM 1990 / NBRC 0083 / IGC 2968) (Yeast).